A 145-amino-acid polypeptide reads, in one-letter code: UI (145 aa).

The N-terminal stretch at 1 to 22 (MKPVPLVLLITSVLLTTHIPLS) is a signal peptide. Residue V143 is modified to Valine amide.

Belongs to the sauvagine/corticotropin-releasing factor/urotensin I family.

It is found in the secreted. Its function is as follows. Urotensin is found in the teleost caudal neurosecretory system. It has a suggested role in osmoregulation and as a corticotropin-releasing factor. The non-hormonal portion of this precursor may be a urotensin binding protein, urophysin. The sequence is that of UI from Carassius auratus (Goldfish).